Reading from the N-terminus, the 396-residue chain is Tryptophan synthase beta chain (396 aa).

The residue at position 86 (lysine 86) is an N6-(pyridoxal phosphate)lysine.

This sequence belongs to the TrpB family. As to quaternary structure, tetramer of two alpha and two beta chains. It depends on pyridoxal 5'-phosphate as a cofactor.

The enzyme catalyses (1S,2R)-1-C-(indol-3-yl)glycerol 3-phosphate + L-serine = D-glyceraldehyde 3-phosphate + L-tryptophan + H2O. It functions in the pathway amino-acid biosynthesis; L-tryptophan biosynthesis; L-tryptophan from chorismate: step 5/5. In terms of biological role, the beta subunit is responsible for the synthesis of L-tryptophan from indole and L-serine. This Yersinia pseudotuberculosis serotype O:1b (strain IP 31758) protein is Tryptophan synthase beta chain.